The following is a 407-amino-acid chain: Peptidase T (407 aa).

His78 is a Zn(2+) binding site. Residue Asp80 is part of the active site. Asp139 serves as a coordination point for Zn(2+). The active-site Proton acceptor is the Glu173. Residues Glu174, Asp196, and His378 each coordinate Zn(2+).

This sequence belongs to the peptidase M20B family. Requires Zn(2+) as cofactor.

It localises to the cytoplasm. The enzyme catalyses Release of the N-terminal residue from a tripeptide.. Its function is as follows. Cleaves the N-terminal amino acid of tripeptides. This Shewanella halifaxensis (strain HAW-EB4) protein is Peptidase T.